A 379-amino-acid polypeptide reads, in one-letter code: NuA4 complex subunit EAF3 homolog (379 aa).

Residues 6 to 61 (EENEKVLVHHQNRIYEAKIIKVDPKTSKSDKKKPLYFIHYLGWKEKWNEWIEPNKI) form the Tudor-knot domain. Positions 75–212 (TNIKASTTSL…KRNDSKSSHF (138 aa)) are disordered. A compositionally biased stretch (low complexity) spans 78–87 (KASTTSLNNK). Acidic residues predominate over residues 111 to 141 (ENSDEDENESELEDGGGEDADEGGEDIEDQE). Residues 165 to 199 (SSSSSSSSKSNNNNNNNNNNNNNNNNNNNNNNNNN) show a composition bias toward low complexity. One can recognise an MRG domain in the interval 214–377 (STKFIDIEIP…ASSPYLKAAS (164 aa)).

In terms of assembly, component of the NuA4 histone acetyltransferase complex.

The protein localises to the nucleus. Functionally, component of the NuA4 histone acetyltransferase complex which is involved in transcriptional activation of selected genes principally by acetylation of nucleosomal histone H4 and H2A. The NuA4 complex is also involved in DNA repair. Also a component of a complex which acts to repress transcription by deacetylation of nucleosomal histones. This chain is NuA4 complex subunit EAF3 homolog, found in Dictyostelium discoideum (Social amoeba).